Here is a 419-residue protein sequence, read N- to C-terminus: Multiple organellar RNA editing factor 1, mitochondrial (419 aa).

Residues M1 to L60 constitute a mitochondrion transit peptide. Positions K174 to R401 are disordered. Over residues G237–Q252 the composition is skewed to low complexity. Over residues G310–Q327 the composition is skewed to gly residues. The span at G342–A356 shows a compositional bias: low complexity. Positions G357–G367 are enriched in gly residues. Polar residues predominate over residues E371–R401.

Belongs to the MORF family. As to quaternary structure, homodimer and heterodimer with MORF3. Heterodimers with MORF8/RIP1, MORF4/RIP4 and MORF6/RIP6. Interacts with PCMP-E90/MEF13. Interacts with PCMP-H13/MEF35.

The protein resides in the mitochondrion. In terms of biological role, involved in organellar RNA editing. Required for the processing of numerous RNA editing sites in mitochondria. Binds to the mitochondrial MEF19 and MEF21 factors, two pentatricopeptide repeat-containing proteins involved in RNA editing. The protein is Multiple organellar RNA editing factor 1, mitochondrial of Arabidopsis thaliana (Mouse-ear cress).